The primary structure comprises 376 residues: Formate dehydrogenase 2 (376 aa).

Substrate is bound by residues valine 97 and asparagine 121. Residues 176 to 177 (RI), aspartate 197, 244 to 248 (PLHKD), threonine 270, aspartate 296, and 325 to 328 (HISG) contribute to the NAD(+) site.

Belongs to the D-isomer specific 2-hydroxyacid dehydrogenase family. FDH subfamily. Homodimer.

It localises to the cytoplasm. The catalysed reaction is formate + NAD(+) = CO2 + NADH. Catalyzes the NAD(+)-dependent oxidation of formate to carbon dioxide. Formate oxidation is the final step in the methanol oxidation pathway in methylotrophic microorganisms. Has a role in the detoxification of exogenous formate in non-methylotrophic organisms. The chain is Formate dehydrogenase 2 (FDH2) from Saccharomyces cerevisiae (strain CEN.PK113-7D) (Baker's yeast).